The primary structure comprises 295 residues: Protein FAM110A (295 aa).

2 disordered regions span residues 117-148 and 160-191; these read PVSP…PPSI and PASP…KSDL. Composition is skewed to pro residues over residues 138–147 and 160–171; these read LATPPRPPPS and PASPIQPCPSPG.

This sequence belongs to the FAM110 family. In terms of assembly, may interact with CSPP1.

Its subcellular location is the cytoplasm. It localises to the cytoskeleton. The protein resides in the microtubule organizing center. The protein localises to the centrosome. It is found in the spindle pole. In Bos taurus (Bovine), this protein is Protein FAM110A (FAM110A).